A 1014-amino-acid chain; its full sequence is MFWIVLIVILLLALAGLFFVRAQSEREWMREVSAWQEKKGEKQAELPEIKDGMPDFPELALMLFHAVKTAVYWLFVGVVRFCRNYLAHESEPDRPVPPASANRADVPTASDGYSDSGNGTEEAETEEAEAAEEEAADTEDIATAVIDNRRIPFDRSIAEGLMPSESEISPVRPVFKEITLEEATRALNSAALRETKKRYIDAFEKNETAVPKVRVSDTPMEGLQIIGLDDPVLQRTYSRMFDADKEAFSESADYGFEPYFEKQHPSAFSAVKAENARNAPFRRHAGQGKGQAEAKSPDVSQGQSVSDGTAVRDARRRVSVNLKEPNKATVSAEARISRLIPESRTVVGKRDVEMPSETENVFTETVSSVGYGGPVYDETADIHIEEPAAPDAWVVEPPEVPKVPMPAIDIPPPPPVSEIYNRTYEPPAGFEQVQRSRIAETDHLADDVLNGGWQEETAAIANDGSEGVAERSSGQYLSETEAFGHDSQAVCPFENVPSERPSRRASDTEADEGAFQSEETGAVSEHLPTTDLLLPPLFNPGATQTEEELLENSITIEEKLAEFKVKVKVVDSYSGPVITRYEIEPDVGVRGNSVLNLEKDLARSLGVASIRVVETILGKTCMGLELPNPKRQMIRLSEIFNSPEFAESKSKLTLALGQDITGQPVVTDLGKAPHLLVAGTTGSGKSVGVNAMILSMLFKAAPEDVRMIMIDPKMLELSIYEGIPHLLAPVVTDMKLAANALNWCVNEMEKRYRLMSFMGVRNLAGFNQKIAEAAARGEKIGNPFSLTPDNPEPLEKLPFIVVVVDEFADLMMTAGKKIEELIARLAQKARAAGIHLILATQRPSVDVITGLIKANIPTRIAFQVSSKIDSRTILDQMGAENLLGQGDMLFLPPGTAYPQRVHGAFASDEEVHRVVEYLKQFGEPDYVDDILSGGMSDDLLGISRSGDGETDPMYDEAVSVVLKTRKASISGVQRALRIGYNRAARLIDQMEAEGIVSAPEHNGNRTILVPLDNA.

The chain crosses the membrane as a helical span at residues 1–21 (MFWIVLIVILLLALAGLFFVR). Disordered stretches follow at residues 89–142 (ESEP…EDIA), 283–318 (RHAG…RRRV), and 487–525 (SQAV…AVSE). The segment covering 121 to 140 (EEAETEEAEAAEEEAADTED) has biased composition (acidic residues). Over residues 298 to 307 (DVSQGQSVSD) the composition is skewed to polar residues. One can recognise a FtsK domain in the interval 662-871 (GQPVVTDLGK…FQVSSKIDSR (210 aa)). An ATP-binding site is contributed by 682-687 (GSGKSV).

This sequence belongs to the FtsK/SpoIIIE/SftA family. As to quaternary structure, homohexamer. Forms a ring that surrounds DNA.

The protein localises to the cell inner membrane. Essential cell division protein that coordinates cell division and chromosome segregation. The N-terminus is involved in assembly of the cell-division machinery. The C-terminus functions as a DNA motor that moves dsDNA in an ATP-dependent manner towards the dif recombination site, which is located within the replication terminus region. Translocation stops specifically at Xer-dif sites, where FtsK interacts with the Xer recombinase, allowing activation of chromosome unlinking by recombination. FtsK orienting polar sequences (KOPS) guide the direction of DNA translocation. FtsK can remove proteins from DNA as it translocates, but translocation stops specifically at XerCD-dif site, thereby preventing removal of XerC and XerD from dif. The chain is DNA translocase FtsK 2 (ftsK2) from Neisseria meningitidis serogroup A / serotype 4A (strain DSM 15465 / Z2491).